The chain runs to 962 residues: Vacuolar membrane protease (962 aa).

The Cytoplasmic portion of the chain corresponds to 1-15; it reads MVSSRRGFNPIAFTP. A helical transmembrane segment spans residues 16-36; that stretch reads WPVTILSSLVYLALIIPIIVV. Over 37-390 the chain is Vacuolar; that stretch reads HHLVPPAPKE…FQLNTLFGHS (354 aa). N-linked (GlcNAc...) asparagine glycans are attached at residues Asn110 and Asn113. Zn(2+)-binding residues include His169 and Asp181. Glu215 (proton acceptor) is an active-site residue. Zn(2+) is bound by residues Glu216, Glu241, and His314. A helical transmembrane segment spans residues 391 to 411; that stretch reads VALLVVAPLLLIITSVALFAV. The Cytoplasmic portion of the chain corresponds to 412–440; that stretch reads DKMYMFSMYTYISESGGQVSLYGLRGMFR. The helical transmembrane segment at 441 to 461 threads the bilayer; that stretch reads FPLILGISTALTIALAFLIMK. Over 462–472 the chain is Vacuolar; it reads VNPFIIYSSPY. Residues 473–493 traverse the membrane as a helical segment; it reads AVWSMMLSTCMFFAWFISCVA. At 494–503 the chain is on the cytoplasmic side; the sequence is DFARPSALHR. A helical membrane pass occupies residues 504-524; it reads AYSFSWMFGIMWVFLVIATVY. Topologically, residues 525–534 are vacuolar; the sequence is QKQHGIASSY. The helical transmembrane segment at 535–555 threads the bilayer; the sequence is FIVFYFAGVAVATWISYLELF. The Cytoplasmic portion of the chain corresponds to 556-667; that stretch reads GLPKTQDYAR…WSIYLMSSAW (112 aa). Residues 568 to 617 are disordered; that stretch reads GRLSDRTPSSDSHFLAPSADELPSSSSAAGRDFNPEDVEDEEPTESTSLL. The span at 602–611 shows a compositional bias: acidic residues; the sequence is PEDVEDEEPT. The chain crosses the membrane as a helical span at residues 668 to 688; that stretch reads ILQFLLVAPIVIILLGQLGLF. At 689–704 the chain is on the vacuolar side; that stretch reads LTSATYQIGADGGSQL. A helical transmembrane segment spans residues 705 to 725; the sequence is VIYIGIAVLSVLILLPLFPFI. The Cytoplasmic segment spans residues 726-731; that stretch reads HRFTYH. The chain crosses the membrane as a helical span at residues 732 to 752; it reads IPTFLLFILIGTLVYNLTAFP. The Vacuolar portion of the chain corresponds to 753 to 962; sequence FSHSNRLKLA…LVEGSYSFKL (210 aa). N-linked (GlcNAc...) asparagine glycosylation is present at Asn834.

This sequence belongs to the peptidase M28 family. Zn(2+) is required as a cofactor.

It localises to the vacuole membrane. Its function is as follows. May be involved in vacuolar sorting and osmoregulation. This is Vacuolar membrane protease from Arthroderma benhamiae (strain ATCC MYA-4681 / CBS 112371) (Trichophyton mentagrophytes).